The primary structure comprises 905 residues: DNA gyrase subunit A (905 aa).

The Topo IIA-type catalytic domain maps to Ile35 to Leu524. The O-(5'-phospho-DNA)-tyrosine intermediate role is filled by Tyr123. A GyrA-box motif is present at residues Gln551–Gly557. The segment at Thr885–Val905 is disordered. Acidic residues predominate over residues Ala886–Val905.

Belongs to the type II topoisomerase GyrA/ParC subunit family. As to quaternary structure, heterotetramer, composed of two GyrA and two GyrB chains. In the heterotetramer, GyrA contains the active site tyrosine that forms a transient covalent intermediate with DNA, while GyrB binds cofactors and catalyzes ATP hydrolysis.

Its subcellular location is the cytoplasm. The catalysed reaction is ATP-dependent breakage, passage and rejoining of double-stranded DNA.. Functionally, a type II topoisomerase that negatively supercoils closed circular double-stranded (ds) DNA in an ATP-dependent manner to modulate DNA topology and maintain chromosomes in an underwound state. Negative supercoiling favors strand separation, and DNA replication, transcription, recombination and repair, all of which involve strand separation. Also able to catalyze the interconversion of other topological isomers of dsDNA rings, including catenanes and knotted rings. Type II topoisomerases break and join 2 DNA strands simultaneously in an ATP-dependent manner. The sequence is that of DNA gyrase subunit A from Rickettsia conorii (strain ATCC VR-613 / Malish 7).